We begin with the raw amino-acid sequence, 137 residues long: Small ribosomal subunit protein uS9c (137 aa).

Belongs to the universal ribosomal protein uS9 family.

Its subcellular location is the plastid. It is found in the chloroplast. The polypeptide is Small ribosomal subunit protein uS9c (rps9) (Gracilaria tenuistipitata var. liui (Red alga)).